The primary structure comprises 424 residues: Glucose-1-phosphate adenylyltransferase (424 aa).

Alpha-D-glucose 1-phosphate is bound by residues Y112, G177, 192–193, and S210; that span reads EK.

Belongs to the bacterial/plant glucose-1-phosphate adenylyltransferase family. In terms of assembly, homotetramer.

It catalyses the reaction alpha-D-glucose 1-phosphate + ATP + H(+) = ADP-alpha-D-glucose + diphosphate. Its pathway is glycan biosynthesis; glycogen biosynthesis. Its function is as follows. Involved in the biosynthesis of ADP-glucose, a building block required for the elongation reactions to produce glycogen. Catalyzes the reaction between ATP and alpha-D-glucose 1-phosphate (G1P) to produce pyrophosphate and ADP-Glc. The polypeptide is Glucose-1-phosphate adenylyltransferase (Methylococcus capsulatus (strain ATCC 33009 / NCIMB 11132 / Bath)).